Here is a 385-residue protein sequence, read N- to C-terminus: Protein kup-1 (385 aa).

2 disordered regions span residues 1–20 and 326–385; these read MDDE…VRED and SLAS…PDEY. Basic and acidic residues-rich tracts occupy residues 8–20, 339–351, and 364–385; these read GSDH…VRED, RTDE…DDIV, and GRVE…PDEY.

The protein is Protein kup-1 (kup-1) of Caenorhabditis elegans.